The chain runs to 243 residues: Peptidyl-tRNA hydrolase (243 aa).

Residue Tyr-14 coordinates tRNA. His-19 serves as the catalytic Proton acceptor. Residues Tyr-64, Asn-66, and Asn-112 each contribute to the tRNA site. Residues 190–207 (KAEEEKPRKEGKDGEKKP) show a composition bias toward basic and acidic residues. Residues 190–243 (KAEEEKPRKEGKDGEKKPAGQSHIRQARSSNQPKLPATGPMAEMLKKMFGNKGE) are disordered. Positions 212–222 (HIRQARSSNQP) are enriched in polar residues.

Belongs to the PTH family. In terms of assembly, monomer.

It localises to the cytoplasm. The enzyme catalyses an N-acyl-L-alpha-aminoacyl-tRNA + H2O = an N-acyl-L-amino acid + a tRNA + H(+). Hydrolyzes ribosome-free peptidyl-tRNAs (with 1 or more amino acids incorporated), which drop off the ribosome during protein synthesis, or as a result of ribosome stalling. Its function is as follows. Catalyzes the release of premature peptidyl moieties from peptidyl-tRNA molecules trapped in stalled 50S ribosomal subunits, and thus maintains levels of free tRNAs and 50S ribosomes. The protein is Peptidyl-tRNA hydrolase of Rhizobium etli (strain CIAT 652).